Reading from the N-terminus, the 130-residue chain is Cytidine deaminase (130 aa).

A CMP/dCMP-type deaminase domain is found at Val-3–Ser-130. Residue Asn-43 to Glu-45 coordinates substrate. Residue Cys-54 coordinates Zn(2+). Glu-56 functions as the Proton donor in the catalytic mechanism. Zn(2+) is bound by residues Cys-88 and Cys-91.

Belongs to the cytidine and deoxycytidylate deaminase family. Homodimer. It depends on Zn(2+) as a cofactor.

It catalyses the reaction cytidine + H2O + H(+) = uridine + NH4(+). It carries out the reaction 2'-deoxycytidine + H2O + H(+) = 2'-deoxyuridine + NH4(+). In terms of biological role, this enzyme scavenges exogenous and endogenous cytidine and 2'-deoxycytidine for UMP synthesis. The polypeptide is Cytidine deaminase (cdd) (Mycoplasma genitalium (strain ATCC 33530 / DSM 19775 / NCTC 10195 / G37) (Mycoplasmoides genitalium)).